The chain runs to 300 residues: N-carbamoylputrescine amidase (300 aa).

The 259-residue stretch at 8–266 (VTVAALQFAC…EAVLVAQFDL (259 aa)) folds into the CN hydrolase domain. Glu47 functions as the Proton acceptor in the catalytic mechanism. Lys120 functions as the Proton donor in the catalytic mechanism. The active-site Nucleophile is Cys157.

It belongs to the carbon-nitrogen hydrolase superfamily. In terms of assembly, homooctamer.

It catalyses the reaction N-carbamoylputrescine + H2O + 2 H(+) = putrescine + NH4(+) + CO2. Its pathway is amine and polyamine biosynthesis; putrescine biosynthesis via agmatine pathway; putrescine from N-carbamoylputrescine (amidase route): step 1/1. In terms of biological role, involved in polyamine biosynthesis. This Solanum lycopersicum (Tomato) protein is N-carbamoylputrescine amidase (CPA).